We begin with the raw amino-acid sequence, 140 residues long: Large ribosomal subunit protein bL17 (140 aa).

It belongs to the bacterial ribosomal protein bL17 family. Part of the 50S ribosomal subunit. Contacts protein L32.

The chain is Large ribosomal subunit protein bL17 from Ruegeria pomeroyi (strain ATCC 700808 / DSM 15171 / DSS-3) (Silicibacter pomeroyi).